Consider the following 216-residue polypeptide: MGQKINPLGFRLGTTQGHHSIWFAQAKNYSDGLQEDQKIRNCIKNYLQKNMRISSGVEGIARIEIRKRIDLIQVIIYMGFPKLLLEGKTRRIEELQMNVQKELNCVNRKLNIAITRITNPYGHPNILAEFIAGQLKNRVSFRKAIKKAIELTEQADTKGIQVQIAGRLDGKEIARVEWMREGRVPLQTIRAKIDYCSYGVRTVYGVLGIKIWIFWE.

Positions 43–118 (IKNYLQKNMR…KLNIAITRIT (76 aa)) constitute a KH type-2 domain.

Belongs to the universal ribosomal protein uS3 family. As to quaternary structure, part of the 30S ribosomal subunit.

The protein resides in the plastid. It localises to the chloroplast. The chain is Small ribosomal subunit protein uS3c (rps3) from Eucalyptus globulus subsp. globulus (Tasmanian blue gum).